The primary structure comprises 343 residues: Protein RecA (343 aa).

65-72 (GPESSGKT) provides a ligand contact to ATP.

Belongs to the RecA family.

It localises to the cytoplasm. Can catalyze the hydrolysis of ATP in the presence of single-stranded DNA, the ATP-dependent uptake of single-stranded DNA by duplex DNA, and the ATP-dependent hybridization of homologous single-stranded DNAs. It interacts with LexA causing its activation and leading to its autocatalytic cleavage. The polypeptide is Protein RecA (Pseudoalteromonas atlantica (strain T6c / ATCC BAA-1087)).